The following is a 131-amino-acid chain: Profilin-1 (131 aa).

Belongs to the profilin family. Occurs in many kinds of cells as a complex with monomeric actin in a 1:1 ratio. Expressed at low levels roots, leaves, stems, flowers and siliques. Expressed in leaf epidermal cells, trichomes and stem epidermal cells. Detected in phloem exudates (at protein level).

It is found in the cytoplasm. The protein resides in the cytoskeleton. In terms of biological role, binds to actin monomers and regulates the organization of the actin cytoskeleton. At high concentrations, profilin prevents the polymerization of actin, whereas it enhances it at low concentrations. At low concentrations, associates with the poly-proline motif of formins to enhance actin filament elongation rate. Binds ACT1, ACT7 and ACT11 and inhibits actin polymerization. Coordinates the stochastic dynamic properties of actin filaments by modulating formin-mediated actin nucleation and assembly during axial cell expansion. Binds G-actin and poly-L-proline in vitro. Inhibits cell growth of various pathogenic fungal strains. May play a role as antifungal proteins in the defense system against fungal pathogen attacks. The chain is Profilin-1 from Arabidopsis thaliana (Mouse-ear cress).